A 177-amino-acid chain; its full sequence is Phycoerythrin beta subunit (177 aa).

Residues tyrosine 18, lysine 28, asparagine 35, and aspartate 39 each coordinate (2R,3E)-phycoerythrobilin. Cysteine 50, aspartate 54, and cysteine 61 together coordinate 15,16-dihydrobiliverdin. The (2R,3E)-phycoerythrobilin site is built by cysteine 82, arginine 84, and aspartate 85. Arginine 129 serves as a coordination point for 15,16-dihydrobiliverdin. Asparagine 144 lines the (2R,3E)-phycoerythrobilin pocket. Glutamine 148 and lysine 149 together coordinate 15,16-dihydrobiliverdin. (2R,3E)-phycoerythrobilin contacts are provided by proline 154, glycine 156, and cysteine 158.

Belongs to the phycobiliprotein family. Heterotetramer of 2 different alpha chains and 2 identical beta chains which form 2 alpha-beta heterodimers within the heterotetramer. The two alpha-beta heterodimers are rotated to an open configuration in contrast to the closed configuration found in other cryptophyte species due to the insertion of a single amino acid, 'Asp-65', in a conserved region of the alpha chain. In the open form, the central chromophores are not in physical contact but are separated by a water-filled channel. In terms of processing, contains three phycoerythrobilin chromophores and one 15,16-dihydrobiliverdin chromophore with binding of the phycoerythrobilin chromophores mediated by both the alpha and beta subunits.

The protein localises to the plastid. Its subcellular location is the chloroplast thylakoid membrane. In terms of biological role, light-harvesting photosynthetic bile pigment-protein from the phycobiliprotein complex. The chain is Phycoerythrin beta subunit from Hemiselmis andersenii (Cryptophyte alga).